The following is a 533-amino-acid chain: Acyl-CoA-binding domain-containing protein 5 (533 aa).

An ACB domain is found at 42–131 (HETRFEAAVK…MKKILETMPM (90 aa)). Residues 53-62 (IQSLPKNGSF), 73-77 (YSFYK), Lys99, and Tyr118 each bind an acyl-CoA. The disordered stretch occupies residues 182 to 227 (TPNAKTVNGKAESSDSGAESEEEAAQEDPKRPEPRDSDKKMMKKSA). Residues Ser194, Ser195, Ser197, and Ser201 each carry the phosphoserine modification. Residues 208–227 (EDPKRPEPRDSDKKMMKKSA) show a composition bias toward basic and acidic residues. Phosphoserine is present on residues Ser244 and Ser314. The interval 339-443 (GGNPSQPLES…ERWGSDRGSR (105 aa)) is disordered. Positions 374–383 (GKGEVKRGGE) are enriched in basic and acidic residues. Ser429 bears the Phosphoserine mark. The segment covering 432–442 (DGERWGSDRGS) has biased composition (basic and acidic residues). The stretch at 448–478 (EQIALVLMRLQEDMQNVLQRLHKLEMLAASQ) forms a coiled coil. N6-acetyllysine is present on Lys470. A helical membrane pass occupies residues 503-525 (SPGALTFAIIWPFIAQWLVHLYY).

This sequence belongs to the ATG37 family. In terms of tissue distribution, highly expressed in brain and liver. Lower levels of expression in spleen and heart.

Its subcellular location is the peroxisome membrane. Functionally, acyl-CoA binding protein which acts as the peroxisome receptor for pexophagy but is dispensable for aggrephagy and nonselective autophagy. Binds medium- and long-chain acyl-CoA esters. The polypeptide is Acyl-CoA-binding domain-containing protein 5 (ACBD5) (Bos taurus (Bovine)).